Consider the following 416-residue polypeptide: UDP-N-acetylmuramoylalanine--D-glutamate ligase (416 aa).

Residue 108–114 coordinates ATP; it reads GTTGKTT.

The protein belongs to the MurCDEF family.

The protein resides in the cytoplasm. The catalysed reaction is UDP-N-acetyl-alpha-D-muramoyl-L-alanine + D-glutamate + ATP = UDP-N-acetyl-alpha-D-muramoyl-L-alanyl-D-glutamate + ADP + phosphate + H(+). Its pathway is cell wall biogenesis; peptidoglycan biosynthesis. Functionally, cell wall formation. Catalyzes the addition of glutamate to the nucleotide precursor UDP-N-acetylmuramoyl-L-alanine (UMA). The sequence is that of UDP-N-acetylmuramoylalanine--D-glutamate ligase from Chlamydia trachomatis serovar L2b (strain UCH-1/proctitis).